The chain runs to 228 residues: Heptaprenylglyceryl phosphate synthase (228 aa).

Sn-glycerol 1-phosphate is bound at residue K12. Positions 14 and 40 each coordinate Mg(2+). Sn-glycerol 1-phosphate contacts are provided by residues Y159 to G164, G189, and G209 to N210.

This sequence belongs to the GGGP/HepGP synthase family. Group I subfamily. In terms of assembly, homodimer. Mg(2+) is required as a cofactor.

The catalysed reaction is sn-glycerol 1-phosphate + all-trans-heptaprenyl diphosphate = 3-heptaprenyl-sn-glycero-1-phosphate + diphosphate. Its pathway is membrane lipid metabolism; glycerophospholipid metabolism. Its function is as follows. Prenyltransferase that catalyzes in vivo the transfer of the heptaprenyl moiety of heptaprenyl pyrophosphate (HepPP; 35 carbon atoms) to the C3 hydroxyl of sn-glycerol-1-phosphate (G1P), producing heptaprenylglyceryl phosphate (HepGP). This reaction is an ether-bond-formation step in the biosynthesis of archaea-type G1P-based membrane lipids found in Bacillales. The polypeptide is Heptaprenylglyceryl phosphate synthase (Bacillus licheniformis (strain ATCC 14580 / DSM 13 / JCM 2505 / CCUG 7422 / NBRC 12200 / NCIMB 9375 / NCTC 10341 / NRRL NRS-1264 / Gibson 46)).